We begin with the raw amino-acid sequence, 326 residues long: ATP synthase subunit gamma, mitochondrial (326 aa).

The transit peptide at 1–45 (MAMAALRREGRRLAAAPFTSPTPLNALRSSLVSPSEEIGLSGVRS) directs the protein to the mitochondrion.

It belongs to the ATPase gamma chain family. In terms of assembly, F-type ATPases have 2 components, CF(1) - the catalytic core - and CF(0) - the membrane proton channel. CF(1) has five subunits: alpha(3), beta(3), gamma(1), delta(1), epsilon(1). CF(0) has three main subunits: a, b and c.

It is found in the mitochondrion. It localises to the mitochondrion inner membrane. Its function is as follows. Mitochondrial membrane ATP synthase (F(1)F(0) ATP synthase or Complex V) produces ATP from ADP in the presence of a proton gradient across the membrane which is generated by electron transport complexes of the respiratory chain. F-type ATPases consist of two structural domains, F(1) - containing the extramembraneous catalytic core, and F(0) - containing the membrane proton channel, linked together by a central stalk and a peripheral stalk. During catalysis, ATP synthesis in the catalytic domain of F(1) is coupled via a rotary mechanism of the central stalk subunits to proton translocation. Part of the complex F(1) domain and the central stalk which is part of the complex rotary element. The gamma subunit protrudes into the catalytic domain formed of alpha(3)beta(3). Rotation of the central stalk against the surrounding alpha(3)beta(3) subunits leads to hydrolysis of ATP in three separate catalytic sites on the beta subunits. This Ipomoea batatas (Sweet potato) protein is ATP synthase subunit gamma, mitochondrial (ATPC).